Here is a 337-residue protein sequence, read N- to C-terminus: Phenylalanine--tRNA ligase alpha subunit (337 aa).

E252 lines the Mg(2+) pocket.

Belongs to the class-II aminoacyl-tRNA synthetase family. Phe-tRNA synthetase alpha subunit type 1 subfamily. In terms of assembly, tetramer of two alpha and two beta subunits. Mg(2+) serves as cofactor.

It is found in the cytoplasm. It carries out the reaction tRNA(Phe) + L-phenylalanine + ATP = L-phenylalanyl-tRNA(Phe) + AMP + diphosphate + H(+). This is Phenylalanine--tRNA ligase alpha subunit from Francisella tularensis subsp. mediasiatica (strain FSC147).